A 304-amino-acid polypeptide reads, in one-letter code: ADP-ribosyl cyclase/cyclic ADP-ribose hydrolase 1 (304 aa).

The Cytoplasmic portion of the chain corresponds to 1 to 21 (MANYEFSQVSGDRPGCRLSRK). Residues 22–44 (AQIGLGVGLLVLIALVVGIVVIL) form a helical; Signal-anchor for type II membrane protein membrane-spanning segment. Residues 45–304 (LRPRSLLVWT…PEHPSCRLNT (260 aa)) are Extracellular-facing. Intrachain disulfides connect cysteine 70–cysteine 86, cysteine 103–cysteine 184, and cysteine 164–cysteine 177. N-linked (GlcNAc...) asparagine glycosylation is present at asparagine 104. Cysteine 123 is a catalytic residue. N-linked (GlcNAc...) asparagine glycosylation is present at asparagine 124. Residue cysteine 205 is part of the active site. N-linked (GlcNAc...) asparagine glycosylation is found at asparagine 213 and asparagine 223. Disulfide bonds link cysteine 258–cysteine 279 and cysteine 291–cysteine 300.

It belongs to the ADP-ribosyl cyclase family. In terms of assembly, homodimer.

Its subcellular location is the membrane. It carries out the reaction NAD(+) = cyclic ADP-beta-D-ribose + nicotinamide + H(+). It catalyses the reaction nicotinate + NADP(+) = nicotinate-adenine dinucleotide phosphate + nicotinamide. The catalysed reaction is NAD(+) + H2O = ADP-D-ribose + nicotinamide + H(+). In terms of biological role, synthesizes the second messengers cyclic ADP-ribose (cADPR) and nicotinate-adenine dinucleotide phosphate (NAADP), the former a second messenger for glucose-induced insulin secretion, the latter a Ca(2+) mobilizer. Also has cADPR hydrolase activity. The polypeptide is ADP-ribosyl cyclase/cyclic ADP-ribose hydrolase 1 (Cd38) (Mus musculus (Mouse)).